The following is a 158-amino-acid chain: U4/U6.U5 small nuclear ribonucleoprotein 27 kDa protein (158 aa).

Residues 1–102 are disordered; sequence MGRSRSRSPE…AEDLEGKTEE (102 aa). A compositionally biased stretch (basic residues) spans 13-59; that stretch reads RERRRSRSASRERERRRRERSRSRERRRSRSRSPHRRRSRSPRRHRS. Positions 66–101 are enriched in basic and acidic residues; that stretch reads RLKDRRDDDKKEPKESKGGGSKERQLAAEDLEGKTE.

It belongs to the SNUT3 family. As to quaternary structure, part of a tri-snRNP complex.

The protein localises to the nucleus. Its function is as follows. May play a role in mRNA splicing. In Xenopus laevis (African clawed frog), this protein is U4/U6.U5 small nuclear ribonucleoprotein 27 kDa protein (snrnp27).